A 93-amino-acid chain; its full sequence is Small ribosomal subunit protein uS19 (93 aa).

The disordered stretch occupies residues 73-93 (EFSPTRTYRGHNKKDKKIQKK). Residues 80–93 (YRGHNKKDKKIQKK) are compositionally biased toward basic residues.

It belongs to the universal ribosomal protein uS19 family.

Its function is as follows. Protein S19 forms a complex with S13 that binds strongly to the 16S ribosomal RNA. This chain is Small ribosomal subunit protein uS19 (rpsS), found in Aster yellows phytoplasma.